A 162-amino-acid chain; its full sequence is Peptidyl-prolyl cis-trans isomerase (162 aa).

One can recognise a PPIase cyclophilin-type domain in the interval 5–161 (FFDVQFGGDA…TTIKIVDSGV (157 aa)).

The protein belongs to the cyclophilin-type PPIase family. PPIase A subfamily.

The catalysed reaction is [protein]-peptidylproline (omega=180) = [protein]-peptidylproline (omega=0). With respect to regulation, binds cyclosporin A (CsA). CsA mediates some of its effects via an inhibitory action on PPIase. Functionally, PPIases accelerate the folding of proteins. It catalyzes the cis-trans isomerization of proline imidic peptide bonds in oligopeptides. This is Peptidyl-prolyl cis-trans isomerase from Paramecium primaurelia.